The chain runs to 339 residues: Protein FAM76B (339 aa).

N-acetylalanine is present on Ala2. Phosphoserine occurs at positions 22 and 148. A disordered region spans residues 144 to 243; it reads EQRKSLGSSH…INQSADSGGT (100 aa). Low complexity predominate over residues 148–160; the sequence is SLGSSHSNSSSSS. Residues 167-189 show a composition bias toward basic residues; it reads HHSKHHHHHHHHHHRHSSGHHKV. Residue Ser193 is modified to Phosphoserine. A Phosphothreonine modification is found at Thr215. The segment covering 215 to 224 has biased composition (basic and acidic residues); it reads TPKKKPKLES. Residues 228-243 show a composition bias toward polar residues; that stretch reads NGDSSSINQSADSGGT. Residues 248–328 are a coiled coil; it reads LISQLKEEVM…QVAALSKGKK (81 aa).

It belongs to the FAM76 family. Interacts with HNRNPA2B1 (via C-terminus); the interaction results in retention of HNRNPA2B1 in the nucleus and inhibition of the NF-kappa-B-mediated inflammatory pathway.

Its subcellular location is the nucleus speckle. Functionally, negatively regulates the NF-kappa-B-mediated inflammatory pathway by preventing the translocation of HNRNPA2B1 from the nucleus to the cytoplasm. Inhibits the PI3K/Akt/NF-kappa-B pathway-mediated polarization of M1 macrophages by binding to and stabilizing PIK3CD mRNA, resulting in increased levels of PIK3CD protein and increased levels of phosphorylated downstream target AKT which leads to decreased NF-kappa-B signaling. This Mus musculus (Mouse) protein is Protein FAM76B (Fam76b).